The chain runs to 343 residues: Apolipoprotein L6 (343 aa).

Residues methionine 1–glutamate 10 show a composition bias toward basic and acidic residues. A disordered region spans residues methionine 1 to leucine 24.

The protein belongs to the apolipoprotein L family. In terms of tissue distribution, widely expressed; highly expressed in the uterus, fetal brain and spinal cord, also detected in heart, liver, lung, colon, spleen, thymus, prostate, placenta, adrenal gland, salivary and mammary gland.

It is found in the cytoplasm. In terms of biological role, may affect the movement of lipids in the cytoplasm or allow the binding of lipids to organelles. The chain is Apolipoprotein L6 (APOL6) from Homo sapiens (Human).